Consider the following 154-residue polypeptide: Myoglobin (154 aa).

Residues 2–148 (GLSDQEWQQV…FRNDMASKYK (147 aa)) enclose the Globin domain. Residue His65 participates in nitrite binding. His65 is an O2 binding site. His94 serves as a coordination point for heme b.

The protein belongs to the globin family. As to quaternary structure, monomeric.

It localises to the cytoplasm. The protein resides in the sarcoplasm. It catalyses the reaction Fe(III)-heme b-[protein] + nitric oxide + H2O = Fe(II)-heme b-[protein] + nitrite + 2 H(+). It carries out the reaction H2O2 + AH2 = A + 2 H2O. Monomeric heme protein which primary function is to store oxygen and facilitate its diffusion within muscle tissues. Reversibly binds oxygen through a pentacoordinated heme iron and enables its timely and efficient release as needed during periods of heightened demand. Depending on the oxidative conditions of tissues and cells, and in addition to its ability to bind oxygen, it also has a nitrite reductase activity whereby it regulates the production of bioactive nitric oxide. Under stress conditions, like hypoxia and anoxia, it also protects cells against reactive oxygen species thanks to its pseudoperoxidase activity. The chain is Myoglobin (MB) from Anas poecilorhyncha (Indian spot-billed duck).